We begin with the raw amino-acid sequence, 2280 residues long: Acetyl-CoA carboxylase (2280 aa).

The Biotin carboxylation domain maps to 68–577 (VITSILIANN…TTGWLDRLIA (510 aa)). Residues 226 to 418 (ETNIVTVDDD…LPAAQLQVAM (193 aa)) enclose the ATP-grasp domain. 266-271 (GGGGKG) is a binding site for ATP. Mn(2+) is bound by residues glutamate 375, glutamate 389, and asparagine 391. Arginine 393 is an active-site residue. The 75-residue stretch at 704–778 (LEQENDPTQL…DAGDILGILT (75 aa)) folds into the Biotinyl-binding domain. Lysine 745 carries the N6-biotinyllysine modification. Phosphoserine is present on residues serine 1179 and serine 1181. One can recognise a CoA carboxyltransferase N-terminal domain in the interval 1524–1863 (PYPTKEWLQP…KRNNPVPISP (340 aa)). The segment at 1524 to 2181 (PYPTKEWLQP…EHYALQKITQ (658 aa)) is carboxyltransferase. The CoA site is built by arginine 1772, lysine 2074, and arginine 2076. The CoA carboxyltransferase C-terminal domain occupies 1867–2181 (TWDRDVEFYP…EHYALQKITQ (315 aa)).

As to quaternary structure, interacts with sad1. It depends on biotin as a cofactor. Requires Mn(2+) as cofactor.

The protein resides in the cytoplasm. It carries out the reaction hydrogencarbonate + acetyl-CoA + ATP = malonyl-CoA + ADP + phosphate + H(+). It catalyses the reaction N(6)-biotinyl-L-lysyl-[protein] + hydrogencarbonate + ATP = N(6)-carboxybiotinyl-L-lysyl-[protein] + ADP + phosphate + H(+). Its pathway is lipid metabolism; malonyl-CoA biosynthesis; malonyl-CoA from acetyl-CoA: step 1/1. With respect to regulation, by phosphorylation. In terms of biological role, carries out three functions: biotin carboxyl carrier protein, biotin carboxylase and carboxyltransferase. The sequence is that of Acetyl-CoA carboxylase (cut6) from Schizosaccharomyces pombe (strain 972 / ATCC 24843) (Fission yeast).